We begin with the raw amino-acid sequence, 1465 residues long: DNA polymerase III polC-type (1465 aa).

One can recognise an Exonuclease domain in the interval 427–583; sequence YVVFDVETTG…YDAEATGRLL (157 aa).

It belongs to the DNA polymerase type-C family. PolC subfamily.

It is found in the cytoplasm. It carries out the reaction DNA(n) + a 2'-deoxyribonucleoside 5'-triphosphate = DNA(n+1) + diphosphate. Its function is as follows. Required for replicative DNA synthesis. This DNA polymerase also exhibits 3' to 5' exonuclease activity. The sequence is that of DNA polymerase III polC-type from Streptococcus pyogenes serotype M3 (strain ATCC BAA-595 / MGAS315).